A 465-amino-acid polypeptide reads, in one-letter code: Casein kinase 1-like protein 2 (465 aa).

In terms of domain architecture, Protein kinase spans 9-277 (FRLGRKIGGG…LKRLFRDLFI (269 aa)). ATP is bound by residues 15 to 23 (IGGGSFGEI) and lysine 38. The active-site Proton acceptor is the aspartate 128. Disordered stretches follow at residues 300–344 (STPP…GIPR) and 396–428 (REAAVLGTDSEPSNPQIVEAGSGSNSKIPVSRN). Polar residues predominate over residues 405 to 428 (SEPSNPQIVEAGSGSNSKIPVSRN).

This sequence belongs to the protein kinase superfamily. CK1 Ser/Thr protein kinase family. Casein kinase I subfamily. Monomer. Autophosphorylated.

The protein localises to the cytoplasm. It is found in the nucleus. It carries out the reaction L-seryl-[protein] + ATP = O-phospho-L-seryl-[protein] + ADP + H(+). It catalyses the reaction L-threonyl-[protein] + ATP = O-phospho-L-threonyl-[protein] + ADP + H(+). In terms of biological role, casein kinases are operationally defined by their preferential utilization of acidic proteins such as caseins as substrates. It can phosphorylate a large number of proteins. The sequence is that of Casein kinase 1-like protein 2 from Arabidopsis thaliana (Mouse-ear cress).